The primary structure comprises 2155 residues: Alpha-tectorin (2155 aa).

The N-terminal stretch at 1–24 (MNYSSLLRIWVSFIFALVRHQAQP) is a signal peptide. Asn34, Asn187, Asn215, Asn278, Asn455, Asn506, Asn528, and Asn560 each carry an N-linked (GlcNAc...) asparagine glycan. One can recognise an NIDO domain in the interval 98-252 (PFWADVHNGI…GRWAFKVDGK (155 aa)). One can recognise a VWFC domain in the interval 260–314 (CTSRGQFLRRGEVFWDDLNCTIKCRCLDFNNEIYCQEASCSPYEVCEPKGRFFYC). The VWFD 1 domain occupies 320 to 500 (STCVVFGEPH…RVYHADWKCG (181 aa)). Disulfide bonds link Cys322/Cys461 and Cys344/Cys499. A TIL 1 domain is found at 597 to 650 (CPSFSHYSVCTSSCPDTCSDLTASQNCATPCTEGCECNEGFVLSTSQCVPLHKC). Asn670, Asn687, Asn813, Asn843, Asn855, Asn898, Asn920, Asn931, and Asn949 each carry an N-linked (GlcNAc...) asparagine glycan. A VWFD 2 domain is found at 711-886 (TVCLLSQNQV…SWTTFEEICN (176 aa)). Residues Cys713 and Cys849 are joined by a disulfide bond. Residues 984–1036 (CPENSHFEECMTCTETCETLALGPICVDSCSEGCQCDEGYALQGSQCVPRSEC) enclose the TIL 2 domain. 4 N-linked (GlcNAc...) asparagine glycosylation sites follow: Asn1048, Asn1064, Asn1235, and Asn1364. Residues 1098 to 1278 (ASCIVSGYGH…SWVKRDTFCQ (181 aa)) form the VWFD 3 domain. Intrachain disulfides connect Cys1100/Cys1241 and Cys1122/Cys1277. Positions 1372 to 1425 (CPPNSHYESCVSVCQPRCAAIRLKSDCNHYCVEGCQCDAGYVLNGKSCILPHNC) constitute a TIL 3 domain. Residues 1485-1666 (SYCLAAGGGV…QKRPLAPSCN (182 aa)) enclose the VWFD 4 domain. Disulfide bonds link Cys1487-Cys1622, Cys1509-Cys1665, Cys1717-Cys1775, Cys1741-Cys1784, Cys1786-Cys1818, Cys1806-Cys1898, and Cys1837-Cys1857. N-linked (GlcNAc...) asparagine glycosylation is found at Asn1538, Asn1565, Asn1756, Asn1772, Asn1794, Asn1851, Asn1864, Asn1880, Asn1920, and Asn1939. Positions 1805-2059 (TCKAAQMEVS…YSCKINCPQN (255 aa)) constitute a ZP domain. 3 cysteine pairs are disulfide-bonded: Cys1980/Cys2040, Cys2001/Cys2056, and Cys2045/Cys2052. Asn2091 carries GPI-anchor amidated asparagine lipidation. Residues 2092-2155 (GGCEQICTSR…HLIYKSGATS (64 aa)) constitute a propeptide, removed in mature form.

In terms of assembly, may form homomeric filament after self-association or heteromeric filament after association with beta-tectorin. Interacts with CEACAM16. Post-translationally, 3 products of tectorin seem to exist: HMM, MMM and LMM. They may be generated by active processing or the result of proteolysis occurring between intrachain disulfide bonds. In terms of processing, the presence of a hydrophobic C-terminus preceded by a potential cleavage site strongly suggests that tectorins are synthesized as glycosylphosphatidylinositol-linked, membrane-bound precursors. Tectorins are targeted to the apical surface of the inner ear epithelia by the lipid and proteolytically released into the extracellular compartment. In terms of tissue distribution, cochlea-specific.

The protein resides in the cell membrane. It is found in the secreted. It localises to the extracellular space. Its subcellular location is the extracellular matrix. Its function is as follows. One of the major non-collagenous components of the tectorial membrane. The tectorial membrane is an extracellular matrix of the inner ear that covers the neuroepithelium of the cochlea and contacts the stereocilia bundles of specialized sensory hair cells. Sound induces movement of these hair cells relative to the tectorial membrane, deflects the stereocilia and leads to fluctuations in hair-cell membrane potential, transducing sound into electrical signals. The chain is Alpha-tectorin (Tecta) from Mus musculus (Mouse).